Here is a 434-residue protein sequence, read N- to C-terminus: Putative D-alanyl-D-alanine carboxypeptidase (434 aa).

The chain crosses the membrane as a helical; Signal-anchor span at residues 7–25 (YLSLLAVSCSVSAAKYPVL).

Belongs to the peptidase S12 family. YfeW subfamily.

The protein localises to the cell inner membrane. The enzyme catalyses Preferential cleavage: (Ac)2-L-Lys-D-Ala-|-D-Ala. Also transpeptidation of peptidyl-alanyl moieties that are N-acyl substituents of D-alanine.. In terms of biological role, penicillin-binding protein. Has low DD-carboxypeptidase activity. The sequence is that of Putative D-alanyl-D-alanine carboxypeptidase from Escherichia coli (strain K12).